A 250-amino-acid polypeptide reads, in one-letter code: Cellulose biosynthesis protein BcsQ (250 aa).

9–16 (VRGGVGTT) provides a ligand contact to ATP.

This sequence belongs to the BcsQ family.

The protein localises to the cytoplasm. Functionally, essential for cellulose biosynthesis, shown for strain 1094, a commensal, natural cellulose producer. Also shown in strain W3110 which has a restored reading frame (TAG stop codon to TTG for amino acid 6, called strain AR3110), this protein. May play a role in subcellular localization of an active cellulose biosynthesis apparatus at the bacterial cell pole. The combination of cellulose and the curli fiber network confer cohesion, elasticity and tissue-like properties to colonies. The chain is Cellulose biosynthesis protein BcsQ from Escherichia coli (strain K12).